A 560-amino-acid chain; its full sequence is SWI/SNF complex subunit SWI3A homolog (560 aa).

The span at 1-13 (MSPPVAGAASSGD) shows a compositional bias: low complexity. Residues 1 to 22 (MSPPVAGAASSGDGPPGRPPRE) are disordered. Residues 24 to 127 (YTIPASSGWF…FSASPSRPEA (104 aa)) enclose the SWIRM domain. Positions 242–293 (HSSSAWTDAETLLLLEGVLKHGDDWDLIAQHVRTKNKSECIARLIQLPFGEH) constitute an SANT domain. Over residues 311 to 330 (TTDGKVNKSTVKESSSQPTE) the composition is skewed to polar residues. Disordered stretches follow at residues 311–352 (TTDG…EEHP) and 414–445 (QTRAFSSNHARQSDDVGGGDRDVEMHGHPDKK). The segment covering 331-342 (TVDDMQIDGNED) has biased composition (acidic residues). Basic and acidic residues-rich tracts occupy residues 343-352 (GADKSVEEHP) and 424-445 (RQSDDVGGGDRDVEMHGHPDKK).

In terms of assembly, interacts with LFR.

It localises to the nucleus. Functionally, component of a multiprotein complex equivalent of the SWI/SNF complex, an ATP-dependent chromatin-remodeling complex, which is required for the positive and negative regulation of gene expression of a large number of genes. It changes chromatin structure by altering DNA-histone contacts within a nucleosome, leading eventually to a change in nucleosome position, thus facilitating or repressing binding of gene-specific transcription factors. The polypeptide is SWI/SNF complex subunit SWI3A homolog (Oryza sativa subsp. japonica (Rice)).